Reading from the N-terminus, the 254-residue chain is Major prion protein (254 aa).

Positions methionine 1–cysteine 22 are cleaved as a signal peptide. The interval lysine 23–serine 231 is interaction with GRB2, ERI3 and SYN1. The disordered stretch occupies residues arginine 25–threonine 107. 5 consecutive repeat copies span residues proline 51–glutamine 59, proline 60–glutamine 67, proline 68–glutamine 75, proline 76–glutamine 83, and proline 84–glutamine 91. Positions proline 51–glutamine 91 are 5 X 8 AA tandem repeats of P-H-G-G-G-W-G-Q. Positions glutamine 52 to threonine 95 are enriched in gly residues. Cu(2+) is bound by residues histidine 61, glycine 62, glycine 63, histidine 69, glycine 70, glycine 71, histidine 77, glycine 78, glycine 79, histidine 85, glycine 86, and glycine 87. The cysteines at positions 179 and 214 are disulfide-linked. N-linked (GlcNAc...) asparagine glycosylation is found at asparagine 181 and asparagine 197. Residue serine 231 is the site of GPI-anchor amidated serine attachment. Positions serine 232–glycine 254 are cleaved as a propeptide — removed in mature form.

This sequence belongs to the prion family. As to quaternary structure, monomer and homodimer. Has a tendency to aggregate into amyloid fibrils containing a cross-beta spine, formed by a steric zipper of superposed beta-strands. Soluble oligomers may represent an intermediate stage on the path to fibril formation. Copper binding may promote oligomerization. Interacts with GRB2, APP, ERI3/PRNPIP and SYN1. Mislocalized cytosolically exposed PrP interacts with MGRN1; this interaction alters MGRN1 subcellular location and causes lysosomal enlargement. Interacts with KIAA1191.

It localises to the cell membrane. It is found in the golgi apparatus. Its primary physiological function is unclear. Has cytoprotective activity against internal or environmental stresses. May play a role in neuronal development and synaptic plasticity. May be required for neuronal myelin sheath maintenance. May play a role in iron uptake and iron homeostasis. Soluble oligomers are toxic to cultured neuroblastoma cells and induce apoptosis (in vitro). Association with GPC1 (via its heparan sulfate chains) targets PRNP to lipid rafts. Also provides Cu(2+) or Zn(2+) for the ascorbate-mediated GPC1 deaminase degradation of its heparan sulfate side chains. The sequence is that of Major prion protein (PRNP) from Sigmodon hispidus (Hispid cotton rat).